Consider the following 211-residue polypeptide: Probable endopeptidase cgR_2070 (211 aa).

An N-terminal signal peptide occupies residues 1 to 35 (MGKHRRNNSNATRKAVAASAVALGATAAIASPAQA). Residues 97–211 (ASTGQAIVDA…YMPFHSAVRF (115 aa)) form the NlpC/P60 domain. C127 serves as the catalytic Nucleophile. H175 functions as the Proton acceptor in the catalytic mechanism. Residue H187 is part of the active site.

Belongs to the peptidase C40 family.

Its subcellular location is the secreted. The protein is Probable endopeptidase cgR_2070 of Corynebacterium glutamicum (strain R).